Here is a 216-residue protein sequence, read N- to C-terminus: Thiamine-phosphate synthase (216 aa).

4-amino-2-methyl-5-(diphosphooxymethyl)pyrimidine contacts are provided by residues 41-45 and Asp77; that span reads QLREK. Mg(2+) contacts are provided by Asp78 and Asp97. 4-amino-2-methyl-5-(diphosphooxymethyl)pyrimidine is bound at residue Ser116. Residue 143 to 145 coordinates 2-[(2R,5Z)-2-carboxy-4-methylthiazol-5(2H)-ylidene]ethyl phosphate; that stretch reads TTS. 4-amino-2-methyl-5-(diphosphooxymethyl)pyrimidine is bound at residue Lys146. Residues Gly174 and 194–195 each bind 2-[(2R,5Z)-2-carboxy-4-methylthiazol-5(2H)-ylidene]ethyl phosphate; that span reads IS.

It belongs to the thiamine-phosphate synthase family. Mg(2+) is required as a cofactor.

The enzyme catalyses 2-[(2R,5Z)-2-carboxy-4-methylthiazol-5(2H)-ylidene]ethyl phosphate + 4-amino-2-methyl-5-(diphosphooxymethyl)pyrimidine + 2 H(+) = thiamine phosphate + CO2 + diphosphate. It catalyses the reaction 2-(2-carboxy-4-methylthiazol-5-yl)ethyl phosphate + 4-amino-2-methyl-5-(diphosphooxymethyl)pyrimidine + 2 H(+) = thiamine phosphate + CO2 + diphosphate. The catalysed reaction is 4-methyl-5-(2-phosphooxyethyl)-thiazole + 4-amino-2-methyl-5-(diphosphooxymethyl)pyrimidine + H(+) = thiamine phosphate + diphosphate. It participates in cofactor biosynthesis; thiamine diphosphate biosynthesis; thiamine phosphate from 4-amino-2-methyl-5-diphosphomethylpyrimidine and 4-methyl-5-(2-phosphoethyl)-thiazole: step 1/1. In terms of biological role, condenses 4-methyl-5-(beta-hydroxyethyl)thiazole monophosphate (THZ-P) and 2-methyl-4-amino-5-hydroxymethyl pyrimidine pyrophosphate (HMP-PP) to form thiamine monophosphate (TMP). This chain is Thiamine-phosphate synthase, found in Pediococcus pentosaceus (strain ATCC 25745 / CCUG 21536 / LMG 10740 / 183-1w).